Consider the following 424-residue polypeptide: Glutamate-1-semialdehyde 2,1-aminomutase (424 aa).

Position 258 is an N6-(pyridoxal phosphate)lysine (Lys258).

This sequence belongs to the class-III pyridoxal-phosphate-dependent aminotransferase family. HemL subfamily. It depends on pyridoxal 5'-phosphate as a cofactor.

It is found in the cytoplasm. The catalysed reaction is (S)-4-amino-5-oxopentanoate = 5-aminolevulinate. It participates in porphyrin-containing compound metabolism; protoporphyrin-IX biosynthesis; 5-aminolevulinate from L-glutamyl-tRNA(Glu): step 2/2. This Pyrobaculum neutrophilum (strain DSM 2338 / JCM 9278 / NBRC 100436 / V24Sta) (Thermoproteus neutrophilus) protein is Glutamate-1-semialdehyde 2,1-aminomutase.